We begin with the raw amino-acid sequence, 342 residues long: S-adenosylmethionine:tRNA ribosyltransferase-isomerase (342 aa).

It belongs to the QueA family. Monomer.

It is found in the cytoplasm. It catalyses the reaction 7-aminomethyl-7-carbaguanosine(34) in tRNA + S-adenosyl-L-methionine = epoxyqueuosine(34) in tRNA + adenine + L-methionine + 2 H(+). It participates in tRNA modification; tRNA-queuosine biosynthesis. Transfers and isomerizes the ribose moiety from AdoMet to the 7-aminomethyl group of 7-deazaguanine (preQ1-tRNA) to give epoxyqueuosine (oQ-tRNA). In Streptococcus agalactiae serotype V (strain ATCC BAA-611 / 2603 V/R), this protein is S-adenosylmethionine:tRNA ribosyltransferase-isomerase.